The following is a 325-amino-acid chain: Glycerol-3-phosphate dehydrogenase [NAD(P)+] (325 aa).

W11, R30, and K103 together coordinate NADPH. The sn-glycerol 3-phosphate site is built by K103, G131, and S133. Residue A135 coordinates NADPH. The sn-glycerol 3-phosphate site is built by K186, D242, S252, R253, and N254. The Proton acceptor role is filled by K186. An NADPH-binding site is contributed by R253. NADPH-binding residues include V279 and E281.

The protein belongs to the NAD-dependent glycerol-3-phosphate dehydrogenase family.

It localises to the cytoplasm. It catalyses the reaction sn-glycerol 3-phosphate + NAD(+) = dihydroxyacetone phosphate + NADH + H(+). The catalysed reaction is sn-glycerol 3-phosphate + NADP(+) = dihydroxyacetone phosphate + NADPH + H(+). The protein operates within membrane lipid metabolism; glycerophospholipid metabolism. Its function is as follows. Catalyzes the reduction of the glycolytic intermediate dihydroxyacetone phosphate (DHAP) to sn-glycerol 3-phosphate (G3P), the key precursor for phospholipid synthesis. The sequence is that of Glycerol-3-phosphate dehydrogenase [NAD(P)+] from Wolbachia pipientis subsp. Culex pipiens (strain wPip).